Here is a 107-residue protein sequence, read N- to C-terminus: Putative double-stranded DNA mimic protein YpsIP31758_1954 (107 aa).

Belongs to the putative dsDNA mimic protein family.

In terms of biological role, may act as a double-stranded DNA (dsDNA) mimic. Probably regulates the activity of a dsDNA-binding protein. This Yersinia pseudotuberculosis serotype O:1b (strain IP 31758) protein is Putative double-stranded DNA mimic protein YpsIP31758_1954.